The sequence spans 1156 residues: MGNLLSKFRPGCRRRPLPGPGRGAPAPLSRDASPPGRAHSVPTPRPFRGLFRRNARRRPSAASIFVAPKRPCPLPRAAAAPLGVLPAVGWGLAIRKTPMLPARNPPRFGHPSSVRIPPPSRMFTLLLPSPREPAVKARKPIPATLLEETEVWAQEGPRRVKKDEDPVQIEGEDDEKRTPLSSGEASSTSRSQGTQGDVASFRCSPGPLEGNVYHKFSENSMSEKAQASPASSCLEGPAMPSTHSQAGCARHLGKPDPDATAPPEPAVGCSLLQQKLAAEVLNEEPPPSSLGLPIPLMSGKRMPDEKPFCIPPRSAAPPRAARNRPCKRKMSIPLLLPLPPSLPLLWDRGELPPPAKLPCLSVEGDLHTLEKSPEYKRNSRILEDKTETMTNSSITQPAPSFSQPVQTTDSLPLTTYTSQVSAPLPIPDLADLATGPLILPIPPLSTTPKMDEKIAFTIPNSPLALPADLVPILGDQSNEKGGSYNSVVGAAPLTSDPPTPPSSTPSFKPPVTRESPISMCVDSPPPLSFLTLLPVPSTGTSVITSKPMNSTSVISTVTTNASAHLTSQTAVDPEVVNMDTTAPSQVVIFTSSLSSRVSSLPNSQIHCSAEQRHPGKTSVYTSPLPFIFHNTTPSFNQLFGKEATPQPKFEAPDGQPQKASLPSACVFLSLPIIPPPDTSTLVNSASTASSSKPPIETNAMHTTPPSKAVILQSASVSKKYLPFYLGLPGSGNTQPSGNTASVQGSTSLPAQSVRAPATASNHPLNPGATPQPKFGAPDGPQQKTSLPSAHDFLSLPIMVPPDTSTLVSSASAASLSKPAIDTSDMNTTPPSKTVILQSTFVSRKEEYIRFYMGLPGSGNTLHSDSIASAQVSTSFPAQADRRPTTTSSHPLNTGSISHSTLGATDGQQKSDSSFILGNPATPAPVIGLTSPSVQPLSGSIIPPGFAELTSPYTALGTPVNAEPVEGHNASAFPNGTAKTSGFRIATGMPGTGDSTLLVGNTIPGPQVIMGPGTPMDGGSIGFSMSAPGPSSTSGELNIGQGQSGTPSTTSVFPFGQAAWDPTGHSMAAAPQGASNIPVFGYTSAAAYIPGLDPPTQNSCSGMGGDGTRSIVGGPCVPAFQQCILQHTWTERKFYTSSTHYYGQETYVRRHVCFQLP.

Disordered stretches follow at residues 1-60 (MGNL…RRPS), 155-204 (EGPR…FRCS), 219-266 (NSMS…PEPA), 481-515 (GGSY…TRES), 680-703 (TLVN…MHTT), 732-786 (NTQP…KTSL), 872-915 (STSF…SSFI), and 1026-1046 (APGP…SGTP). The span at 50-59 (LFRRNARRRP) shows a compositional bias: basic residues. A compositionally biased stretch (basic and acidic residues) spans 156-165 (GPRRVKKDED). Polar residues-rich tracts occupy residues 179 to 197 (PLSS…TQGD) and 219 to 231 (NSMS…SPAS). 4 stretches are compositionally biased toward polar residues: residues 680–692 (TLVN…SSSK), 732–750 (NTQP…SLPA), 884–915 (TTTS…SSFI), and 1028–1046 (GPSS…SGTP).

In terms of assembly, associates with the nuclear pore complex (NPC). Testis-specific in adults. In fetal brain expressed only from the paternal allele.

Its subcellular location is the nucleus. The protein resides in the nucleoplasm. The protein localises to the nucleus inner membrane. Functionally, may be involved in spermatogenesis. In Homo sapiens (Human), this protein is Nuclear pore-associated protein 1 (NPAP1).